Reading from the N-terminus, the 104-residue chain is Gastrin (104 aa).

The signal sequence occupies residues 1–21 (MPRLCVCMLVLVLALATFSEA). The propeptide occupies 22-58 (SWKPRSQLQDASSGPRTNGALEQHQLEKLGPASHHRR). Positions 23-104 (WKPRSQLQDA…RSAEEEDQYN (82 aa)) are disordered. Positions 25-37 (PRSQLQDASSGPR) are enriched in polar residues. At Tyr87 the chain carries Sulfotyrosine. Phe92 is modified (phenylalanine amide). Residue Ser96 is modified to Phosphoserine. Positions 96–104 (SAEEEDQYN) are excised as a propeptide. Tyr103 bears the Sulfotyrosine mark.

The protein belongs to the gastrin/cholecystokinin family. In terms of processing, sulfation on Tyr-87 enhances proteolytic processing, and blocks peptide degradation. Levels of sulfation differ between proteolytically-cleaved gastrins and between tissues.

It is found in the secreted. Functionally, gastrin stimulates the stomach mucosa to produce and secrete hydrochloric acid and the pancreas to secrete its digestive enzymes. It also stimulates smooth muscle contraction and increases blood circulation and water secretion in the stomach and intestine. The chain is Gastrin (Gast) from Rattus norvegicus (Rat).